We begin with the raw amino-acid sequence, 574 residues long: Sulfate adenylyltransferase (574 aa).

The N-terminal stretch occupies residues 1-169 (MANSPHGGVL…IEAVNKLNHY (169 aa)). The segment at 170-394 (DYVALRYSPA…LRESSPPRAT (225 aa)) is catalytic. Glutamine 197 lines the sulfate pocket. Residues 197–200 (QTRN) and 291–294 (GRDH) contribute to the ATP site. Residues threonine 198, arginine 199, and asparagine 200 contribute to the active site. Arginine 199 is a sulfate binding site. Alanine 295 contacts sulfate. Valine 333 provides a ligand contact to ATP. Residues 395–574 (QGFTIFLTGY…LESEGYFDRL (180 aa)) form an allosteric regulation domain; adenylyl-sulfate kinase-like region. Residues 434-437 (DTVR), arginine 451, 477-478 (IA), and arginine 516 contribute to the 3'-phosphoadenylyl sulfate site.

In the N-terminal section; belongs to the sulfate adenylyltransferase family. It in the C-terminal section; belongs to the APS kinase family. As to quaternary structure, homohexamer. Dimer of trimers.

It localises to the cytoplasm. It catalyses the reaction sulfate + ATP + H(+) = adenosine 5'-phosphosulfate + diphosphate. Its pathway is sulfur metabolism; hydrogen sulfide biosynthesis; sulfite from sulfate: step 1/3. With respect to regulation, allosterically inhibited by 3'-phosphoadenosine 5'-phosphosulfate (PAPS). Catalyzes the first intracellular reaction of sulfate assimilation, forming adenosine-5'-phosphosulfate (APS) from inorganic sulfate and ATP. Plays an important role in sulfate activation as a component of the biosynthesis pathway of sulfur-containing amino acids. The protein is Sulfate adenylyltransferase of Aspergillus terreus (strain NIH 2624 / FGSC A1156).